A 321-amino-acid chain; its full sequence is Glucokinase (321 aa).

An ATP-binding site is contributed by 8–13; the sequence is GDVGGT.

This sequence belongs to the bacterial glucokinase family.

It is found in the cytoplasm. The enzyme catalyses D-glucose + ATP = D-glucose 6-phosphate + ADP + H(+). This chain is Glucokinase, found in Psychromonas ingrahamii (strain DSM 17664 / CCUG 51855 / 37).